The sequence spans 188 residues: Putative manganese efflux pump MntP (188 aa).

A run of 6 helical transmembrane segments spans residues 3 to 23, 41 to 61, 66 to 86, 107 to 129, 143 to 163, and 168 to 188; these read ITAT…ASIG, LIFG…GMLA, LEWN…RMII, LLVT…LAFL, ATLI…PLLG, and ILGG…HFHG.

The protein belongs to the MntP (TC 9.B.29) family.

It localises to the cell inner membrane. Its function is as follows. Probably functions as a manganese efflux pump. The polypeptide is Putative manganese efflux pump MntP (Citrobacter koseri (strain ATCC BAA-895 / CDC 4225-83 / SGSC4696)).